The following is a 345-amino-acid chain: MPITPQEALQRTIEHREIFHDEMVELMRQVMRGEVSDMMVAAILTGLRVKKETIGEIAGAATVMREFSRRVDVADRQHMVDIVGTGGDGSDTFNISTCAMFVAAAGGAKVAKHGNRSVSSKSGSADALEALGAVIELQPEQVASALAHTGIGFMYAPVHHPAMKVVAPVRREMGVRTIFNILGPLTNPAGSPNILMGVFHPDLVGIQARVLHELGAERALVVWGRDGMDELSLGAGTLVGELRDGQVREYEVHPEDFGIAMSASRNLKVADAAQSRAMLLQVLDNVPGPALDIVALNAGAALYVAGVAHSIADGVLRARAVIADGSARARVDAYVAYTRQLAVQA.

5-phospho-alpha-D-ribose 1-diphosphate contacts are provided by residues glycine 84, 87-88 (GD), threonine 92, 94-97 (NIST), 112-120 (KHGNRSVSS), and serine 124. Glycine 84 contacts anthranilate. Residue serine 96 coordinates Mg(2+). Asparagine 115 is an anthranilate binding site. Residue arginine 170 coordinates anthranilate. Residues aspartate 229 and glutamate 230 each contribute to the Mg(2+) site.

The protein belongs to the anthranilate phosphoribosyltransferase family. As to quaternary structure, homodimer. The cofactor is Mg(2+).

The catalysed reaction is N-(5-phospho-beta-D-ribosyl)anthranilate + diphosphate = 5-phospho-alpha-D-ribose 1-diphosphate + anthranilate. Its pathway is amino-acid biosynthesis; L-tryptophan biosynthesis; L-tryptophan from chorismate: step 2/5. Functionally, catalyzes the transfer of the phosphoribosyl group of 5-phosphorylribose-1-pyrophosphate (PRPP) to anthranilate to yield N-(5'-phosphoribosyl)-anthranilate (PRA). This is Anthranilate phosphoribosyltransferase from Xanthomonas euvesicatoria pv. vesicatoria (strain 85-10) (Xanthomonas campestris pv. vesicatoria).